Reading from the N-terminus, the 304-residue chain is Non-specific ribonucleoside hydrolase RihC (304 aa).

His-233 is an active-site residue.

The protein belongs to the IUNH family. RihC subfamily.

In terms of biological role, hydrolyzes both purine and pyrimidine ribonucleosides with a broad-substrate specificity. This chain is Non-specific ribonucleoside hydrolase RihC, found in Escherichia coli O139:H28 (strain E24377A / ETEC).